The sequence spans 67 residues: DNA-directed RNA polymerase subunit omega (67 aa).

The protein belongs to the RNA polymerase subunit omega family. The RNAP catalytic core consists of 2 alpha, 1 beta, 1 beta' and 1 omega subunit. When a sigma factor is associated with the core the holoenzyme is formed, which can initiate transcription.

It catalyses the reaction RNA(n) + a ribonucleoside 5'-triphosphate = RNA(n+1) + diphosphate. Its function is as follows. Promotes RNA polymerase assembly. Latches the N- and C-terminal regions of the beta' subunit thereby facilitating its interaction with the beta and alpha subunits. This chain is DNA-directed RNA polymerase subunit omega, found in Burkholderia ambifaria (strain MC40-6).